A 134-amino-acid polypeptide reads, in one-letter code: Small ribosomal subunit protein uS11 (134 aa).

The tract at residues 114-134 is disordered; sequence TPVPHNGTRPPRKWFKRQEKR. The segment covering 123 to 134 has biased composition (basic residues); sequence PPRKWFKRQEKR.

This sequence belongs to the universal ribosomal protein uS11 family. Part of the 30S ribosomal subunit. Interacts with proteins S7 and S18. Binds to IF-3.

Located on the platform of the 30S subunit, it bridges several disparate RNA helices of the 16S rRNA. Forms part of the Shine-Dalgarno cleft in the 70S ribosome. This chain is Small ribosomal subunit protein uS11, found in Mesomycoplasma hyopneumoniae (strain J / ATCC 25934 / NCTC 10110) (Mycoplasma hyopneumoniae).